A 329-amino-acid polypeptide reads, in one-letter code: Malate dehydrogenase (329 aa).

Residue 12–18 (GAAGQIG) coordinates NAD(+). Substrate is bound by residues Arg93 and Arg99. Residues Asn106, Gln113, and 130-132 (VGN) contribute to the NAD(+) site. The substrate site is built by Asn132 and Arg163. His188 acts as the Proton acceptor in catalysis.

It belongs to the LDH/MDH superfamily. MDH type 2 family.

It catalyses the reaction (S)-malate + NAD(+) = oxaloacetate + NADH + H(+). In terms of biological role, catalyzes the reversible oxidation of malate to oxaloacetate. This Frankia alni (strain DSM 45986 / CECT 9034 / ACN14a) protein is Malate dehydrogenase.